The primary structure comprises 464 residues: Siroheme synthase (464 aa).

A precorrin-2 dehydrogenase /sirohydrochlorin ferrochelatase region spans residues 1-203 (MDYLPLFHKL…GQGAEAERLL (203 aa)). NAD(+) is bound by residues 22-23 (EI) and 43-44 (PE). A Phosphoserine modification is found at S128. A uroporphyrinogen-III C-methyltransferase region spans residues 216-464 (GEVYLVGAGP…AWFEGSQQDQ (249 aa)). Position 225 (P225) interacts with S-adenosyl-L-methionine. D248 (proton acceptor) is an active-site residue. K270 functions as the Proton donor in the catalytic mechanism. S-adenosyl-L-methionine contacts are provided by residues 301 to 303 (GGD), I306, 331 to 332 (TA), M383, and G412.

The protein in the N-terminal section; belongs to the precorrin-2 dehydrogenase / sirohydrochlorin ferrochelatase family. In the C-terminal section; belongs to the precorrin methyltransferase family.

The enzyme catalyses uroporphyrinogen III + 2 S-adenosyl-L-methionine = precorrin-2 + 2 S-adenosyl-L-homocysteine + H(+). The catalysed reaction is precorrin-2 + NAD(+) = sirohydrochlorin + NADH + 2 H(+). It catalyses the reaction siroheme + 2 H(+) = sirohydrochlorin + Fe(2+). It functions in the pathway cofactor biosynthesis; adenosylcobalamin biosynthesis; precorrin-2 from uroporphyrinogen III: step 1/1. Its pathway is cofactor biosynthesis; adenosylcobalamin biosynthesis; sirohydrochlorin from precorrin-2: step 1/1. The protein operates within porphyrin-containing compound metabolism; siroheme biosynthesis; precorrin-2 from uroporphyrinogen III: step 1/1. It participates in porphyrin-containing compound metabolism; siroheme biosynthesis; siroheme from sirohydrochlorin: step 1/1. It functions in the pathway porphyrin-containing compound metabolism; siroheme biosynthesis; sirohydrochlorin from precorrin-2: step 1/1. Its function is as follows. Multifunctional enzyme that catalyzes the SAM-dependent methylations of uroporphyrinogen III at position C-2 and C-7 to form precorrin-2 via precorrin-1. Then it catalyzes the NAD-dependent ring dehydrogenation of precorrin-2 to yield sirohydrochlorin. Finally, it catalyzes the ferrochelation of sirohydrochlorin to yield siroheme. The polypeptide is Siroheme synthase (Pseudomonas putida (strain W619)).